We begin with the raw amino-acid sequence, 208 residues long: Probable very-long-chain (3R)-3-hydroxyacyl-CoA dehydratase (208 aa).

Over 1–11 (MSKILKIQYLK) the chain is Cytoplasmic. The chain crosses the membrane as a helical span at residues 12–35 (LYNVISCFLWMSVLLRTGLIWGIT). Topologically, residues 36–46 (KDTAVVFHETN) are lumenal. A helical transmembrane segment spans residues 47–67 (TLVRWVQTLAIAEVFHSIFGL). Topologically, residues 68–78 (VSSSPLTTIIQ) are cytoplasmic. Residues 79 to 97 (VASRLYLVWGVCYPFSYVI) traverse the membrane as a helical segment. Residues 98-102 (EGSPI) lie on the Lumenal side of the membrane. Residues 103-123 (YLSMIIAWSITEIIRYAFYAF) form a helical membrane-spanning segment. Over 124–134 (NLNGDIPAFLT) the chain is Cytoplasmic. Residues 135-157 (WLRYNTFLILYPIGAGSEFLLVL) form a helical membrane-spanning segment. Catalysis depends on residues Tyr145 and Glu152. Residues 158-171 (KSRIAAQYVWSLNK) are Lumenal-facing. A helical transmembrane segment spans residues 172 to 192 (LLWPILMSIYPPGLYIMYTHM). Residues 193-208 (LAQRRKISKRAAARRT) are Cytoplasmic-facing.

The protein belongs to the very long-chain fatty acids dehydratase HACD family.

The protein resides in the endoplasmic reticulum membrane. It catalyses the reaction a very-long-chain (3R)-3-hydroxyacyl-CoA = a very-long-chain (2E)-enoyl-CoA + H2O. The protein operates within lipid metabolism; fatty acid biosynthesis. Catalyzes the third of the four reactions of the long-chain fatty acids elongation cycle. This endoplasmic reticulum-bound enzymatic process, allows the addition of two carbons to the chain of long- and very long-chain fatty acids/VLCFAs per cycle. This enzyme catalyzes the dehydration of the 3-hydroxyacyl-CoA intermediate into trans-2,3-enoyl-CoA, within each cycle of fatty acid elongation. Thereby, it participates in the production of VLCFAs of different chain lengths that are involved in multiple biological processes as precursors of membrane lipids and lipid mediators. This is Probable very-long-chain (3R)-3-hydroxyacyl-CoA dehydratase from Schizosaccharomyces pombe (strain 972 / ATCC 24843) (Fission yeast).